The sequence spans 408 residues: Biphenyl dioxygenase system ferredoxin--NAD(+) reductase component (408 aa).

4–35 (TIAIIGAGLAGSTAARALRAQGYEGRIHLLGD) contributes to the FAD binding site. 145 to 173 (SLVIVGGGLIGCEVATTARKLSVHVTILE) lines the NAD(+) pocket.

The protein belongs to the bacterial ring-hydroxylating dioxygenase ferredoxin reductase family. This dioxygenase system consists of four proteins: the two subunits of the hydroxylase component (BphA and BphE), a ferredoxin (BphF) and a ferredoxin reductase (BphG). The cofactor is FAD.

It catalyses the reaction 2 reduced [2Fe-2S]-[ferredoxin] + NAD(+) + H(+) = 2 oxidized [2Fe-2S]-[ferredoxin] + NADH. The protein operates within xenobiotic degradation; biphenyl degradation. Its function is as follows. Part of the electron transfer component of biphenyl dioxygenase, transfers electrons from ferredoxin (BphF) to NADH. The protein is Biphenyl dioxygenase system ferredoxin--NAD(+) reductase component (bphG) of Paraburkholderia xenovorans (strain LB400).